Reading from the N-terminus, the 679-residue chain is tRNA uridine 5-carboxymethylaminomethyl modification enzyme MnmG (679 aa).

FAD is bound at residue 13 to 18 (GGGHAG). 280–294 (GPRYCPSVEDKINRF) is an NAD(+) binding site.

Belongs to the MnmG family. As to quaternary structure, homodimer. Heterotetramer of two MnmE and two MnmG subunits. The cofactor is FAD.

The protein localises to the cytoplasm. NAD-binding protein involved in the addition of a carboxymethylaminomethyl (cmnm) group at the wobble position (U34) of certain tRNAs, forming tRNA-cmnm(5)s(2)U34. This chain is tRNA uridine 5-carboxymethylaminomethyl modification enzyme MnmG, found in Albidiferax ferrireducens (strain ATCC BAA-621 / DSM 15236 / T118) (Rhodoferax ferrireducens).